A 260-amino-acid polypeptide reads, in one-letter code: HTH-type transcriptional activator FapR (260 aa).

An HTH araC/xylS-type domain is found at 154–251 (ERIVTLLFSD…GVTPKKFEIG (98 aa)). 2 DNA-binding regions (H-T-H motif) span residues 171–192 (SDIA…EQEC) and 218–241 (IGMI…KEYY).

As to quaternary structure, homodimer.

In terms of biological role, positive regulator of the expression of the 987P operon for the fimbrial protein in enterotoxigenic E.coli. This chain is HTH-type transcriptional activator FapR, found in Escherichia coli.